The primary structure comprises 91 residues: RNA-binding protein Hfq (91 aa).

Positions aspartate 9–valine 68 constitute a Sm domain. The disordered stretch occupies residues valine 68–glutamate 91.

Belongs to the Hfq family. Homohexamer.

RNA chaperone that binds small regulatory RNA (sRNAs) and mRNAs to facilitate mRNA translational regulation in response to envelope stress, environmental stress and changes in metabolite concentrations. Also binds with high specificity to tRNAs. This is RNA-binding protein Hfq from Haemophilus influenzae (strain 86-028NP).